Consider the following 146-residue polypeptide: Large ribosomal subunit protein eL32 (146 aa).

It belongs to the eukaryotic ribosomal protein eL32 family.

This is Large ribosomal subunit protein eL32 (rpl32e) from Methanocaldococcus jannaschii (strain ATCC 43067 / DSM 2661 / JAL-1 / JCM 10045 / NBRC 100440) (Methanococcus jannaschii).